The following is a 126-amino-acid chain: Prefoldin subunit beta (126 aa).

Belongs to the prefoldin subunit beta family. As to quaternary structure, heterohexamer of two alpha and four beta subunits.

The protein localises to the cytoplasm. Functionally, molecular chaperone capable of stabilizing a range of proteins. Seems to fulfill an ATP-independent, HSP70-like function in archaeal de novo protein folding. This chain is Prefoldin subunit beta, found in Saccharolobus islandicus (strain Y.N.15.51 / Yellowstone #2) (Sulfolobus islandicus).